A 1478-amino-acid chain; its full sequence is DNA-directed RNA polymerase subunit beta' (1478 aa).

The Mg(2+) site is built by Asp-535, Asp-537, and Asp-539. 4 residues coordinate Zn(2+): Cys-1034, Cys-1109, Cys-1116, and Cys-1119.

Belongs to the RNA polymerase beta' chain family. The RNAP catalytic core consists of 2 alpha, 1 beta, 1 beta' and 1 omega subunit. When a sigma factor is associated with the core the holoenzyme is formed, which can initiate transcription. Mg(2+) is required as a cofactor. The cofactor is Zn(2+).

It catalyses the reaction RNA(n) + a ribonucleoside 5'-triphosphate = RNA(n+1) + diphosphate. DNA-dependent RNA polymerase catalyzes the transcription of DNA into RNA using the four ribonucleoside triphosphates as substrates. The sequence is that of DNA-directed RNA polymerase subunit beta' from Mycoplasmopsis agalactiae (strain NCTC 10123 / CIP 59.7 / PG2) (Mycoplasma agalactiae).